Reading from the N-terminus, the 133-residue chain is ATP synthase epsilon chain (133 aa).

Belongs to the ATPase epsilon chain family. As to quaternary structure, F-type ATPases have 2 components, CF(1) - the catalytic core - and CF(0) - the membrane proton channel. CF(1) has five subunits: alpha(3), beta(3), gamma(1), delta(1), epsilon(1). CF(0) has three main subunits: a, b and c.

Its subcellular location is the cell membrane. Its function is as follows. Produces ATP from ADP in the presence of a proton gradient across the membrane. This Staphylococcus haemolyticus (strain JCSC1435) protein is ATP synthase epsilon chain.